The primary structure comprises 185 residues: MIDDTLLDAEEKMEKAVSVAKEDFANIRTGRITPAVFSKIVVDYYGAPTPVQQLASFHIPEPRMVIITPYDKSSLASIEKAVRDSDLGVNPSNDGTIIRIVFPELSEQRRRDLVKVARSKAEEARVSIRNVRRHAKDGIDRIVRDGDAGEDEGRRAEKDLDEATHRYVGQVDELLRLKEADLLSV.

This sequence belongs to the RRF family.

The protein resides in the cytoplasm. Functionally, responsible for the release of ribosomes from messenger RNA at the termination of protein biosynthesis. May increase the efficiency of translation by recycling ribosomes from one round of translation to another. This is Ribosome-recycling factor from Frankia alni (strain DSM 45986 / CECT 9034 / ACN14a).